The following is a 185-amino-acid chain: Ribonuclease M5 (185 aa).

The 84-residue stretch at 4–87 (KEIIVVEGKD…AFLPKEEALA (84 aa)) folds into the Toprim domain. The Mg(2+) site is built by Glu-10, Asp-56, and Asp-58.

The protein belongs to the ribonuclease M5 family. Mg(2+) is required as a cofactor.

It is found in the cytoplasm. It carries out the reaction Endonucleolytic cleavage of RNA, removing 21 and 42 nucleotides, respectively, from the 5'- and 3'-termini of a 5S-rRNA precursor.. Required for correct processing of both the 5' and 3' ends of 5S rRNA precursor. Cleaves both sides of a double-stranded region yielding mature 5S rRNA in one step. In Bacillus anthracis, this protein is Ribonuclease M5.